The primary structure comprises 323 residues: ComG operon protein 2 (323 aa).

3 consecutive transmembrane segments (helical) span residues 93 to 113 (YPLF…SIII), 143 to 163 (LVII…WLVF), and 296 to 316 (MIYG…LVPM).

Belongs to the GSP F family.

It localises to the cell membrane. Its function is as follows. Required for transformation and DNA binding. The polypeptide is ComG operon protein 2 (comGB) (Bacillus subtilis (strain 168)).